A 366-amino-acid polypeptide reads, in one-letter code: Endophilin-A (366 aa).

The BAR domain maps to 18–248; that stretch reads TEKMGGAEGT…LQEKRSEAES (231 aa). The stretch at 227–247 forms a coiled coil; that stretch reads QCADVLRGLQETLQEKRSEAE. The disordered stretch occupies residues 266-295; it reads GGGGGLNEDGTPSHISSSASPLPSPMRSPA. Low complexity predominate over residues 277–294; it reads PSHISSSASPLPSPMRSP. The 60-residue stretch at 305–364 folds into the SH3 domain; that stretch reads QQQPCCQALYDFDPENPGELGFKENDIITLLNRVDDNWYEGSVNGRTGYFPQSYVQVQVP.

The protein belongs to the endophilin family.

The protein resides in the cytoplasm. Its subcellular location is the membrane. In terms of biological role, required presynaptically at the neuromuscular junction. Implicated in synaptic vesicle endocytosis. This is Endophilin-A from Drosophila willistoni (Fruit fly).